The primary structure comprises 811 residues: Metal transporter cnnm-1 (811 aa).

A signal peptide spans 1–24 (MSASCLRLLTLSLFILGQCNVTAA). 4 N-linked (GlcNAc...) asparagine glycosylation sites follow: N20, N49, N61, and N122. At 25-204 (QNGVDDEVTT…KEYFLPLPLQ (180 aa)) the chain is on the extracellular side. The CNNM transmembrane domain maps to 197-376 (YFLPLPLQIA…TDNGQVSNEL (180 aa)). Residues 205-225 (IACIGFLLCLSALFSGLTLGL) form a helical membrane-spanning segment. Residues 226 to 259 (MSLTPQELELVIKSGAIKEQKCAAKILPVRKKGN) are Cytoplasmic-facing. Residues 260–280 (LLLCSLLLGNVIVNSAISILM) form a helical membrane-spanning segment. At 281–284 (GELT) the chain is on the extracellular side. The chain crosses the membrane as a helical span at residues 285–305 (TGIYALIGSTMGIVIFGEILP). The Cytoplasmic segment spans residues 306–315 (QSICVKKGLE). A helical transmembrane segment spans residues 316–336 (VGAHTISITQLFIFLTFPIAW). The Extracellular segment spans residues 337–811 (PVSKLLDCLL…EEEMALLDQP (475 aa)). 2 consecutive CBS domains span residues 394-456 (MTKI…NFTV) and 462-530 (YHKH…INDE). Residues N435 and N453 are each glycosylated (N-linked (GlcNAc...) asparagine). Residues 741-760 (DVSHNSSAHNSNLSLVEKPG) form a disordered region. The segment covering 743–755 (SHNSSAHNSNLSL) has biased composition (low complexity). N-linked (GlcNAc...) asparagine glycosylation is found at N745 and N752.

Belongs to the ACDP family. As to expression, highly expressed in the intestine and in neurons, but it is also expressed in a variety of tissues including the pharynx, hypodermis, rectum and in muscles.

It is found in the basolateral cell membrane. Functionally, probable metal transporter. Probably acts redundantly with the other metal transport proteins cnnm-2, cnnm-3, cnnm-4 and cnnm-5 to regulate Mg(2+) homeostasis. Promotes postembryonic gonad development by regulating Mg(2+) levels, probably via AMPK signaling. In Caenorhabditis elegans, this protein is Metal transporter cnnm-1.